Here is a 234-residue protein sequence, read N- to C-terminus: Glucosamine-6-phosphate deaminase (234 aa).

Catalysis depends on aspartate 62, which acts as the Proton acceptor; for enolization step. Asparagine 128 acts as the For ring-opening step in catalysis. Histidine 130 acts as the Proton acceptor; for ring-opening step in catalysis. Glutamate 135 acts as the For ring-opening step in catalysis.

Belongs to the glucosamine/galactosamine-6-phosphate isomerase family. NagB subfamily.

It catalyses the reaction alpha-D-glucosamine 6-phosphate + H2O = beta-D-fructose 6-phosphate + NH4(+). The protein operates within amino-sugar metabolism; N-acetylneuraminate degradation; D-fructose 6-phosphate from N-acetylneuraminate: step 5/5. In terms of biological role, catalyzes the reversible isomerization-deamination of glucosamine 6-phosphate (GlcN6P) to form fructose 6-phosphate (Fru6P) and ammonium ion. This Streptococcus pyogenes serotype M1 protein is Glucosamine-6-phosphate deaminase.